The sequence spans 23 residues: Elongation factor Tu (23 aa).

It belongs to the GTP-binding elongation factor family. EF-Tu/EF-1A subfamily. As to quaternary structure, monomer. Post-translationally, the N-terminus is blocked. The C-terminus may be subjected to proteolysis.

The protein localises to the cytoplasm. Functionally, this protein promotes the GTP-dependent binding of aminoacyl-tRNA to the A-site of ribosomes during protein biosynthesis. This Delftia acidovorans (Pseudomonas acidovorans) protein is Elongation factor Tu (tuf).